Reading from the N-terminus, the 171-residue chain is 3-hydroxydecanoyl-[acyl-carrier-protein] dehydratase (171 aa).

H70 is a catalytic residue.

It belongs to the thioester dehydratase family. FabA subfamily. Homodimer.

The protein resides in the cytoplasm. The enzyme catalyses a (3R)-hydroxyacyl-[ACP] = a (2E)-enoyl-[ACP] + H2O. The catalysed reaction is (3R)-hydroxydecanoyl-[ACP] = (2E)-decenoyl-[ACP] + H2O. It catalyses the reaction (2E)-decenoyl-[ACP] = (3Z)-decenoyl-[ACP]. Its pathway is lipid metabolism; fatty acid biosynthesis. Its function is as follows. Necessary for the introduction of cis unsaturation into fatty acids. Catalyzes the dehydration of (3R)-3-hydroxydecanoyl-ACP to E-(2)-decenoyl-ACP and then its isomerization to Z-(3)-decenoyl-ACP. Can catalyze the dehydratase reaction for beta-hydroxyacyl-ACPs with saturated chain lengths up to 16:0, being most active on intermediate chain length. This Pseudomonas syringae pv. tomato (strain ATCC BAA-871 / DC3000) protein is 3-hydroxydecanoyl-[acyl-carrier-protein] dehydratase.